Here is a 74-residue protein sequence, read N- to C-terminus: Anionic peptide clone 9 (74 aa).

A signal peptide spans 1–24; that stretch reads MVSKSLIVLLLVSVLVSTFFTTEA.

This sequence belongs to the non-disulfide-bridged peptide (NDBP) superfamily. Long chain multifunctional peptide (group 2) family. In terms of tissue distribution, expressed by the venom gland.

The protein localises to the secreted. Functionally, may be an antimicrobial peptide. This is Anionic peptide clone 9 from Tityus costatus (Brazilian scorpion).